Consider the following 767-residue polypeptide: Receptor-type tyrosine-protein phosphatase-like ida-1 (767 aa).

An N-terminal signal peptide occupies residues 1 to 19 (MRFFHSIIVLLFSISTGSA). Over 20–398 (FLLYGCNLSE…SLPVESSERD (379 aa)) the chain is Lumenal. Asparagine 26 and asparagine 146 each carry an N-linked (GlcNAc...) asparagine glycan. The helical transmembrane segment at 399-419 (WLLMPVLFVCAFTVTALGLVA) threads the bilayer. At 420–767 (AVQIARSRRH…NHLLKSIATK (348 aa)) the chain is on the cytoplasmic side. A Tyrosine-protein phosphatase domain is found at 527-756 (SQNRTILPFD…KLVYGCVAQE (230 aa)).

It belongs to the protein-tyrosine phosphatase family. Receptor class 8 subfamily. Post-translationally, proteolytically cleaved probably at a dibasic consensus sequence by egl-3. In hermaphrodites specifically expressed in neurons and in particular in the head nerve ring (ADE, ALA, ASI, ASK, AUA, ASG, AVH and AVJ neurons), in the ventral nerve cord, pre-anal ganglia (PVP neuron), in the tail (PHA, PHB and PHC neurons) and in vulval motor neurons VC and HSN and the vulval uv1 cells. In males, also expressed in neurons anterior to the nerve ring and male-specific neurons in the tail.

The protein resides in the cytoplasmic vesicle membrane. It localises to the perikaryon. It is found in the cell projection. The protein localises to the axon. Its subcellular location is the dendrite. Regulates dense-core vesicle (DCV) trafficking and/or secretion. Probably by controlling DCV trafficking, plays a role in the AVG neuron-mediated formation of the right axon tract of the ventral nerve cord. Involved in locomotion by regulating acetylcholine release. Probably by controlling the secretion of FLP neuropeptides, regulates the turning step of male mating behavior. Plays a role in preventing dauer formation. This is Receptor-type tyrosine-protein phosphatase-like ida-1 from Caenorhabditis elegans.